A 520-amino-acid polypeptide reads, in one-letter code: GMP synthase [glutamine-hydrolyzing] (520 aa).

A Glutamine amidotransferase type-1 domain is found at 3-200 (AIAIIDFGSQ…FLDIANCKRD (198 aa)). Catalysis depends on Cys-84, which acts as the Nucleophile. Catalysis depends on residues His-175 and Glu-177. Residues 201-386 (WTMKSFIEEQ…IGLSDEIIFQ (186 aa)) form the GMPS ATP-PPase domain. 228–234 (SGGVDSS) lines the ATP pocket.

As to quaternary structure, homodimer.

The catalysed reaction is XMP + L-glutamine + ATP + H2O = GMP + L-glutamate + AMP + diphosphate + 2 H(+). The protein operates within purine metabolism; GMP biosynthesis; GMP from XMP (L-Gln route): step 1/1. In terms of biological role, catalyzes the synthesis of GMP from XMP. The polypeptide is GMP synthase [glutamine-hydrolyzing] (Wolbachia pipientis wMel).